The following is a 511-amino-acid chain: Glutamate/gamma-aminobutyrate antiporter (511 aa).

Residues 1–13 (MATSVQTGKAKQL) are Cytoplasmic-facing. A helical transmembrane segment spans residues 14–36 (TLLGFFAITASMVMAVYEYPTFA). The Periplasmic segment spans residues 37–40 (TSGF). Residues 41–64 (SLVFFLLLGGILWFIPVGLCAAEM) traverse the membrane as a helical segment. At 65–85 (ATVDGWEEGGVFAWVSNTLGP) the chain is on the cytoplasmic side. A helical membrane pass occupies residues 86 to 112 (RWGFAAISFGYLQIAIGFIPMLYFVLG). The Periplasmic segment spans residues 113–126 (ALSYILKWPALNED). The chain crosses the membrane as a helical span at residues 127-147 (PITKTIAALIILWALALTQFG). Over 148–151 (GTKY) the chain is Cytoplasmic. Residues 152–180 (TARIAKVGFFAGILLPAFILIALAAIYLH) traverse the membrane as a helical segment. At 181 to 201 (SGAPVAIEMDSKTFFPDFSKV) the chain is on the periplasmic side. A helical membrane pass occupies residues 202 to 225 (GTLVVFVAFILSYMGVEASATHVN). The Cytoplasmic portion of the chain corresponds to 226-229 (EMSN). Residues 230-259 (PGRDYPLAMLLLMVAAICLSSVGGLSIAMV) traverse the membrane as a helical segment. The Periplasmic segment spans residues 260–288 (IPGNEINLSAGVMQTFTVLMSHVAPEIEW). A helical transmembrane segment spans residues 289 to 322 (TVRVISALLLLGVLAEIASWIVGPSRGMYVTAQK). Over 323–337 (NLLPAAFAKMNKNGV) the chain is Cytoplasmic. A helical membrane pass occupies residues 338–359 (PVTLVISQLVITSIALIILTNT). Over 360-362 (GGG) the chain is Periplasmic. Residues 363–396 (NNMSFLIALALTVVIYLCAYFMLFIGYIVLVLKH) form a helical membrane-spanning segment. The Cytoplasmic portion of the chain corresponds to 397–409 (PDLKRTFNIPGGK). The helical transmembrane segment at 410 to 430 (GVKLVVAIVGLLTSIMAFIVS) threads the bilayer. Topologically, residues 431 to 443 (FLPPDNIQGDSTD) are periplasmic. A helical transmembrane segment spans residues 444 to 467 (MYVELLVVSFLVVLALPFILYAVH). Topologically, residues 468–511 (DRKGKANTGVTLEPINSQNAPKGHFFLHPRARSPHYIVMNDKKH) are cytoplasmic.

Belongs to the amino acid-polyamine-organocation (APC) superfamily. Glutamate:GABA antiporter (GGA) (TC 2.A.3.7) family. In terms of assembly, monomer.

It localises to the cell inner membrane. It carries out the reaction 4-aminobutanoate(in) + L-glutamate(out) = 4-aminobutanoate(out) + L-glutamate(in). Shows pH-dependent activity. The Glu/GABA transport activity is robust at pH 4.5 and rapidly decreases with increasing pH, with no detectable activity at pH 6.5 or above. The Glu analog L-trans-pyrrolidine-2,4-dicarboxylic acid (L-PDC) blocks the uptake of glutamate by selective inhibition. In terms of biological role, involved in glutaminase-dependent acid resistance. Exchanges extracellular glutamate (Glu) for intracellular gamma-aminobutyric acid (GABA) under acidic conditions. The protonation states of substrates are crucial for transport. Selectively transports Glu with no net charge and GABA with a positive charge. Also efficiently transports glutamine and, to a smaller extent, methionine and leucine. When the extracellular pH drops below 2.5, can import L-glutamine and export either glutamate or GABA. The ability to survive the extremely acidic conditions of the stomach is essential for successful colonization of the host by commensal and pathogenic bacteria. The polypeptide is Glutamate/gamma-aminobutyrate antiporter (Escherichia coli (strain K12)).